A 106-amino-acid chain; its full sequence is Small ribosomal subunit protein uS10 (106 aa).

It belongs to the universal ribosomal protein uS10 family. In terms of assembly, part of the 30S ribosomal subunit.

In terms of biological role, involved in the binding of tRNA to the ribosomes. This Pyrobaculum arsenaticum (strain DSM 13514 / JCM 11321 / PZ6) protein is Small ribosomal subunit protein uS10.